Reading from the N-terminus, the 132-residue chain is Transcriptional regulator MraZ (132 aa).

SpoVT-AbrB domains are found at residues 5 to 47 (TYEH…SKDD) and 76 to 119 (TVEI…SKNK).

The protein belongs to the MraZ family. Forms oligomers.

It is found in the cytoplasm. Its subcellular location is the nucleoid. This Mycoplasma capricolum subsp. capricolum (strain California kid / ATCC 27343 / NCTC 10154) protein is Transcriptional regulator MraZ.